The chain runs to 553 residues: CTP synthase (553 aa).

The interval methionine 1–leucine 270 is amidoligase domain. Residue serine 13 coordinates CTP. Residue serine 13 participates in UTP binding. Residues serine 14–isoleucine 19 and aspartate 71 each bind ATP. Positions 71 and 144 each coordinate Mg(2+). CTP is bound by residues aspartate 151–glutamate 153, lysine 191–glutamine 196, and lysine 227. UTP-binding positions include lysine 191–glutamine 196 and lysine 227. The region spanning threonine 295–threonine 547 is the Glutamine amidotransferase type-1 domain. L-glutamine is bound at residue glycine 356. Cysteine 383 functions as the Nucleophile; for glutamine hydrolysis in the catalytic mechanism. L-glutamine contacts are provided by residues leucine 384–glutamine 387, glutamate 407, and arginine 473. Residues histidine 520 and glutamate 522 contribute to the active site.

The protein belongs to the CTP synthase family. In terms of assembly, homotetramer.

The enzyme catalyses UTP + L-glutamine + ATP + H2O = CTP + L-glutamate + ADP + phosphate + 2 H(+). It carries out the reaction L-glutamine + H2O = L-glutamate + NH4(+). It catalyses the reaction UTP + NH4(+) + ATP = CTP + ADP + phosphate + 2 H(+). It participates in pyrimidine metabolism; CTP biosynthesis via de novo pathway; CTP from UDP: step 2/2. With respect to regulation, allosterically activated by GTP, when glutamine is the substrate; GTP has no effect on the reaction when ammonia is the substrate. The allosteric effector GTP functions by stabilizing the protein conformation that binds the tetrahedral intermediate(s) formed during glutamine hydrolysis. Inhibited by the product CTP, via allosteric rather than competitive inhibition. In terms of biological role, catalyzes the ATP-dependent amination of UTP to CTP with either L-glutamine or ammonia as the source of nitrogen. Regulates intracellular CTP levels through interactions with the four ribonucleotide triphosphates. The sequence is that of CTP synthase from Burkholderia mallei (strain NCTC 10229).